The chain runs to 269 residues: Putative 12-oxophytodienoate reductase-like protein 2A (269 aa).

FMN is bound by residues 28–30 (PLT) and Q103. 175–178 (HGAH) lines the substrate pocket. Catalysis depends on Y180, which acts as the Proton donor. R227 is a binding site for FMN.

It belongs to the NADH:flavin oxidoreductase/NADH oxidase family. FMN is required as a cofactor.

Its function is as follows. Putative oxophytodienoate reductase that may be involved in the biosynthesis or metabolism of oxylipin signaling molecules. In Arabidopsis thaliana (Mouse-ear cress), this protein is Putative 12-oxophytodienoate reductase-like protein 2A.